The following is a 737-amino-acid chain: Cellulose synthase-like protein E1 (737 aa).

2 helical membrane passes run 26–45 (AVYR…VLYY) and 58–78 (AAWL…VIAQ). Catalysis depends on residues Asp146 and Asp451. 5 consecutive transmembrane segments (helical) span residues 528–548 (LWAA…LGLV), 551–571 (TPLF…VFCV), 654–674 (VIIA…LSQI), 683–703 (WNVF…NMPI), and 716–736 (IPTA…LVPI).

Belongs to the glycosyltransferase 2 family. Plant cellulose synthase-like E subfamily.

The protein resides in the golgi apparatus membrane. Functionally, thought to be a Golgi-localized beta-glycan synthase that polymerize the backbones of noncellulosic polysaccharides (hemicelluloses) of plant cell wall. This is Cellulose synthase-like protein E1 (CSLE1) from Oryza sativa subsp. japonica (Rice).